The following is a 907-amino-acid chain: Gamma-tubulin complex component 3 (907 aa).

Residue alanine 2 is modified to N-acetylalanine. Serine 113 carries the phosphoserine modification. The span at 210-230 (NQPSSQATTSKGVPSAVSRNM) shows a compositional bias: polar residues. Residues 210 to 241 (NQPSSQATTSKGVPSAVSRNMTRSRREGDTGG) are disordered.

It belongs to the TUBGCP family. Component of the gamma-tubulin ring complex (gTuRC) consisting of TUBGCP2, TUBGCP3, TUBGCP4, TUBGCP5 and TUBGCP6 and gamma-tubulin TUBG1 or TUBG2. TUBGCP2, TUBGCP3, TUBGCP4, TUBGCP5 and TUBGCP6 assemble in a 5:5:2:1:1 stoichiometry; each is associated with a gamma-tubulin, thereby arranging 14 gamma-tubulins in a helical manner. Gamma-tubulin at the first position is blocked by TUBGCP3 at the last position, allowing 13 protafilaments to grow into a microtubule. The gTuRC (via TUBGCP3 and TUBGCP6) interacts with ACTB and MZT1; the interactions form a luminal bridge that stabilizes the initial structure during complex assembly. The gTuRC (via TUBGCP2) interacts with MZT2A/MZT2B and CDK5RAP2 (via CM1 motif); the interactions play a role in gTuRC activation. Interacts with NIN (via N-terminus); the interaction may promote recruitment of the gamma-tubulin ring complex to the centrosome. As to expression, ubiquitously expressed.

It is found in the cytoplasm. Its subcellular location is the cytoskeleton. It localises to the microtubule organizing center. The protein localises to the centrosome. Component of the gamma-tubulin ring complex (gTuRC) which mediates microtubule nucleation. The gTuRC regulates the minus-end nucleation of alpha-beta tubulin heterodimers that grow into microtubule protafilaments, a critical step in centrosome duplication and spindle formation. This chain is Gamma-tubulin complex component 3 (TUBGCP3), found in Homo sapiens (Human).